A 156-amino-acid polypeptide reads, in one-letter code: Endoribonuclease YbeY (156 aa).

The Zn(2+) site is built by His117, His121, and His127.

It belongs to the endoribonuclease YbeY family. Zn(2+) is required as a cofactor.

Its subcellular location is the cytoplasm. Functionally, single strand-specific metallo-endoribonuclease involved in late-stage 70S ribosome quality control and in maturation of the 3' terminus of the 16S rRNA. This Herminiimonas arsenicoxydans protein is Endoribonuclease YbeY.